The primary structure comprises 294 residues: Nucleophosmin (294 aa).

Met1 is subject to N-acetylmethionine. The tract at residues 1-117 (MEDSMDMDMS…PVHISGQHLV (117 aa)) is necessary for interaction with APEX1. The tract at residues 1–186 (MEDSMDMDMS…DDDDFDDEEA (186 aa)) is required for interaction with SENP3. Ser4 is subject to Phosphoserine; by PLK1 and PLK2. At Ser10 the chain carries Phosphoserine. A Glycyl lysine isopeptide (Lys-Gly) (interchain with G-Cter in SUMO2) cross-link involves residue Lys27. Lys32 carries the N6-acetyllysine; alternate modification. A Glycyl lysine isopeptide (Lys-Gly) (interchain with G-Cter in SUMO1); alternate cross-link involves residue Lys32. Residue Lys32 forms a Glycyl lysine isopeptide (Lys-Gly) (interchain with G-Cter in SUMO2); alternate linkage. The residue at position 43 (Ser43) is a Phosphoserine. Tyr67 is subject to Phosphotyrosine. At Ser70 the chain carries Phosphoserine. Phosphothreonine occurs at positions 75 and 95. A compositionally biased stretch (acidic residues) spans 120-132 (EEDAESEDEEEED). Positions 120–247 (EEDAESEDEE…PKGPSSVEDI (128 aa)) are disordered. Position 125 is a phosphoserine; by CDK2 (Ser125). 2 positions are modified to phosphoserine: Ser137 and Ser139. Residue Lys141 forms a Glycyl lysine isopeptide (Lys-Gly) (interchain with G-Cter in SUMO2) linkage. Lys150 bears the N6-acetyllysine; alternate mark. Lys150 is covalently cross-linked (Glycyl lysine isopeptide (Lys-Gly) (interchain with G-Cter in SUMO2); alternate). The Nuclear localization signal motif lies at 152–157 (PQKKVK). Residue Lys154 is modified to N6-acetyllysine. The span at 161 to 187 (DEDDDDDDEEDDDEDDDDDDFDDEEAE) shows a compositional bias: acidic residues. An interaction with NOP2 region spans residues 187–215 (EEKAPVKKSIRDTPAKNAQKSNQNGKDSK). Residues 188–200 (EKAPVKKSIRDTP) are compositionally biased toward basic and acidic residues. The short motif at 191 to 197 (PVKKSIR) is the Nuclear localization signal element. Residue Thr199 is modified to Phosphothreonine; by CDK1, CDK2 and CDK6. Polar residues predominate over residues 202 to 222 (KNAQKSNQNGKDSKPSSTPRS). An ADP-ribosylserine modification is found at Ser207. Lys212 bears the N6-acetyllysine mark. Residue Lys215 forms a Glycyl lysine isopeptide (Lys-Gly) (interchain with G-Cter in SUMO2) linkage. At Thr219 the chain carries Phosphothreonine; by CDK1. The segment covering 223-235 (KGQESFKKQEKTP) has biased composition (basic and acidic residues). The residue at position 227 (Ser227) is a Phosphoserine. An N6-acetyllysine modification is found at Lys229. An N6-acetyllysine; alternate modification is found at Lys230. A Glycyl lysine isopeptide (Lys-Gly) (interchain with G-Cter in SUMO); alternate cross-link involves residue Lys230. A phosphothreonine; by CDK1 mark is found at Thr234 and Thr237. A phosphoserine mark is found at Ser242 and Ser243. Residues 243 to 294 (SVEDIKAKMQASIEKGGSLPKVEAKFINYVKNCFRMTDQEAIQDLWQWRKSL) form a required for nucleolar localization region. A Glycyl lysine isopeptide (Lys-Gly) (interchain with G-Cter in SUMO1); alternate cross-link involves residue Lys248. Residues Lys248 and Lys250 each participate in a glycyl lysine isopeptide (Lys-Gly) (interchain with G-Cter in SUMO2); alternate cross-link. Residue Lys250 is modified to N6-acetyllysine; alternate. At Ser254 the chain carries Phosphoserine. Lys257 carries the post-translational modification N6-acetyllysine; alternate. Residue Lys257 forms a Glycyl lysine isopeptide (Lys-Gly) (interchain with G-Cter in SUMO1); alternate linkage. Residue Lys257 forms a Glycyl lysine isopeptide (Lys-Gly) (interchain with G-Cter in SUMO2); alternate linkage. Lys257 carries the post-translational modification N6-acetyllysine. Phosphoserine is present on Ser260. Glycyl lysine isopeptide (Lys-Gly) (interchain with G-Cter in SUMO2); alternate cross-links involve residues Lys263, Lys267, and Lys273. Residue Lys263 forms a Glycyl lysine isopeptide (Lys-Gly) (interchain with G-Cter in SUMO); alternate linkage. Lys267 and Lys273 each carry N6-acetyllysine; alternate. Residue Lys267 forms a Glycyl lysine isopeptide (Lys-Gly) (interchain with G-Cter in SUMO1); alternate linkage. Lys267 is modified (N6-succinyllysine; alternate). A Phosphothreonine modification is found at Thr279. Lys292 bears the N6-acetyllysine mark.

The protein belongs to the nucleoplasmin family. In terms of assembly, decamer formed by two pentameric rings associated in a head-to-head fashion. Disulfide-linked dimers under certain conditions. The SWAP complex consists of NPM1, NCL, PARP1 and SWAP70. Interacts with NSUN2 and SENP3. Interacts with the methylated form of RPS10. Interacts (via N-terminal domain) with APEX1; the interaction is RNA-dependent and decreases in hydrogen peroxide-damaged cells. Interacts with isoform 1 of NEK2. Interacts with ROCK2 and BRCA2. Interacts with RPGR. Interacts with CENPW. Interacts with EIF2AK2/PKR. Interacts with CEBPA (isoform 4). Interacts with DDX31; this interaction prevents interaction between NPM1 and HDM2. Interacts with MYC; competitive with NOP53. Interacts with NOP53; the interaction is direct and competitive with MYC. Interacts with LRRC34. Interacts with RRP1B. Interacts with NPM3. Interacts with ALKBH2. Interacts with TTF1 (via C-terminal region). Interacts with NOP2. Interacts with ARID3C (via REKLES DOMAIN); the interaction mediates ARID3C nuclear shuttling. (Microbial infection) Interacts with hepatitis delta virus S-HDAg. As to quaternary structure, (Microbial infection) Interacts with HTLV1 Rex protein (via N-terminal nuclear localization signal). In terms of processing, acetylated at C-terminal lysine residues, thereby increasing affinity to histones. ADP-ribosylated. Post-translationally, phosphorylated at Ser-4 by PLK1 and PLK2. Phosphorylation at Ser-4 by PLK2 in S phase is required for centriole duplication and is sufficient to trigger centriole replication. Phosphorylation at Ser-4 by PLK1 takes place during mitosis. Phosphorylated by CDK2 at Ser-125 and Thr-199. Phosphorylation at Thr-199 may trigger initiation of centrosome duplication. Phosphorylated by CDK1 at Thr-199, Thr-219, Thr-234 and Thr-237 during cell mitosis. When these four sites are phosphorated, RNA-binding activity seem to be abolished. May be phosphorylated at Ser-70 by NEK2. The Thr-199 phosphorylated form has higher affinity for ROCK2. CDK6 triggers Thr-199 phosphorylation when complexed to Kaposi's sarcoma herpesvirus (KSHV) V-cyclin, leading to viral reactivation by reducing viral LANA levels. In terms of processing, sumoylated by ARF. Ubiquitinated. Ubiquitination leads to proteasomal degradation. Deubiquitinated by USP36.

The protein resides in the nucleus. The protein localises to the nucleolus. It is found in the nucleoplasm. Its subcellular location is the cytoplasm. It localises to the cytoskeleton. The protein resides in the microtubule organizing center. The protein localises to the centrosome. Functionally, involved in diverse cellular processes such as ribosome biogenesis, centrosome duplication, protein chaperoning, histone assembly, cell proliferation, and regulation of tumor suppressors p53/TP53 and ARF. Binds ribosome presumably to drive ribosome nuclear export. Associated with nucleolar ribonucleoprotein structures and bind single-stranded nucleic acids. Acts as a chaperonin for the core histones H3, H2B and H4. Stimulates APEX1 endonuclease activity on apurinic/apyrimidinic (AP) double-stranded DNA but inhibits APEX1 endonuclease activity on AP single-stranded RNA. May exert a control of APEX1 endonuclease activity within nucleoli devoted to repair AP on rDNA and the removal of oxidized rRNA molecules. In concert with BRCA2, regulates centrosome duplication. Regulates centriole duplication: phosphorylation by PLK2 is able to trigger centriole replication. Negatively regulates the activation of EIF2AK2/PKR and suppresses apoptosis through inhibition of EIF2AK2/PKR autophosphorylation. Antagonizes the inhibitory effect of ATF5 on cell proliferation and relieves ATF5-induced G2/M blockade. In complex with MYC enhances the transcription of MYC target genes. May act as chaperonin or cotransporter in the nucleolar localization of transcription termination factor TTF1. In Homo sapiens (Human), this protein is Nucleophosmin.